The sequence spans 455 residues: Serine--tRNA ligase (455 aa).

Threonine 252 to glutamate 254 contributes to the L-serine binding site. Residues arginine 283–glutamate 285 and valine 299 each bind ATP. Residue glutamate 306 coordinates L-serine. Residue glutamate 370–serine 373 participates in ATP binding. An L-serine-binding site is contributed by threonine 406.

This sequence belongs to the class-II aminoacyl-tRNA synthetase family. Type-1 seryl-tRNA synthetase subfamily. Homodimer. The tRNA molecule binds across the dimer.

It localises to the cytoplasm. It carries out the reaction tRNA(Ser) + L-serine + ATP = L-seryl-tRNA(Ser) + AMP + diphosphate + H(+). The catalysed reaction is tRNA(Sec) + L-serine + ATP = L-seryl-tRNA(Sec) + AMP + diphosphate + H(+). The protein operates within aminoacyl-tRNA biosynthesis; selenocysteinyl-tRNA(Sec) biosynthesis; L-seryl-tRNA(Sec) from L-serine and tRNA(Sec): step 1/1. Its function is as follows. Catalyzes the attachment of serine to tRNA(Ser). Is also able to aminoacylate tRNA(Sec) with serine, to form the misacylated tRNA L-seryl-tRNA(Sec), which will be further converted into selenocysteinyl-tRNA(Sec). This is Serine--tRNA ligase from Pyrococcus horikoshii (strain ATCC 700860 / DSM 12428 / JCM 9974 / NBRC 100139 / OT-3).